A 335-amino-acid chain; its full sequence is MCAKKLKYAAGDDFVRYATPKEAMEETRREFEKEKQRQQQIKVTQAQTPNTRVHSAPIPLQTQYNKNRAENGHHSYGSPQSYSPRHTKTPVDPRYNVIAQKPAGRPIPPAPTHYNNLNTSAQRIASSPPPLIHNQAVPAQLLKKVAPASFDSREDVRDMQVATQLFHNHDVKGKNRLTAEELQNLLQNDDNSHFCISSVDALINLFGASRFGTVNQAEFIALYKRVKSWRKVYVDNDINGSLTISVSEFHNSLQELGYLIPFEVSEKTFDQYAEFINRNGTGKELKFDKFVEALVWLMRLTKLFRKFDTNQEGIATIQYKDFIDATLYLGRFLPH.

Residues 23-37 are compositionally biased toward basic and acidic residues; sequence AMEETRREFEKEKQR. Residues 23–92 form a disordered region; that stretch reads AMEETRREFE…SPRHTKTPVD (70 aa). Residues 43–53 are compositionally biased toward polar residues; sequence VTQAQTPNTRV. EF-hand domains lie at 144-192, 198-223, 224-259, 260-300, and 301-332; these read KVAP…DDNS, SVDA…IALY, KRVK…LGYL, IPFE…LMRL, and TKLF…LGRF. Residues Asp-170, Arg-176, and Glu-181 each contribute to the Ca(2+) site. The Ca(2+) site is built by Asp-237, Asn-239, Ser-241, Thr-243, and Glu-248.

In terms of assembly, homodimer.

It localises to the cytoplasm. The protein localises to the nucleus. It is found in the bud tip. Its subcellular location is the bud neck. Calcium-binding protein that is required for polar bud growth and cell wall abscission. Can also bind zinc ions. This chain is Peflin (PEF1), found in Saccharomyces cerevisiae (strain ATCC 204508 / S288c) (Baker's yeast).